Here is a 231-residue protein sequence, read N- to C-terminus: Transmembrane gamma-carboxyglutamic acid protein 3 (231 aa).

Positions 1–19 (MAVFLEAKNAHAVLKRFPR) are excised as a propeptide. In terms of domain architecture, Gla spans 20-65 (ANEFLEELRQGTIERECMEEICSYEEVKEVFENKEKTMEFWKGYPN). The Extracellular segment spans residues 20-78 (ANEFLEELRQGTIERECMEEICSYEEVKEVFENKEKTMEFWKGYPNAVYSVRDPSQSSD). 4-carboxyglutamate occurs at positions 22, 25, 26, 33, 35, 38, 39, 44, 45, 48, 51, 54, and 58. Cysteines 36 and 41 form a disulfide. A helical membrane pass occupies residues 79 to 101 (AMYVVVPLLGVVLLIVIALFIIW). Topologically, residues 102-231 (RCQLQKATRH…IVAASPSADK (130 aa)) are cytoplasmic. Disordered stretches follow at residues 140–165 (HSQG…SRGG) and 184–231 (RLSS…SADK). The span at 201 to 212 (QEGSSEEASVSY) shows a compositional bias: polar residues.

In terms of processing, gla residues are produced after subsequent post-translational modifications of glutamate by a vitamin K-dependent gamma-carboxylase.

It is found in the membrane. The protein is Transmembrane gamma-carboxyglutamic acid protein 3 (Prrg3) of Mus musculus (Mouse).